We begin with the raw amino-acid sequence, 204 residues long: UPF0637 protein LMHCC_1566 (204 aa).

The protein belongs to the UPF0637 family.

This Listeria monocytogenes serotype 4a (strain HCC23) protein is UPF0637 protein LMHCC_1566.